The primary structure comprises 837 residues: V-type proton ATPase 116 kDa subunit a 1 (837 aa).

The Cytoplasmic portion of the chain corresponds to 1–388 (MGELFRSEEM…DAYGIGTYRE (388 aa)). A phosphothreonine mark is found at T250 and T360. Y364 carries the phosphotyrosine modification. A helical transmembrane segment spans residues 389-407 (INPAPYTIITFPFLFAVMF). Residues 408-409 (GD) lie on the Vacuolar side of the membrane. The helical transmembrane segment at 410 to 426 (FGHGILMTLFAVWMVLR) threads the bilayer. The Cytoplasmic portion of the chain corresponds to 427–441 (ESRILSQKNENEMFS). Residues 442–471 (TVFSGRYIILLMGVFSMYTGLIYNDCFSKS) traverse the membrane as a helical segment. The Vacuolar portion of the chain corresponds to 472–534 (LNIFGSSWSV…ATNKLTFLNS (63 aa)). The helical transmembrane segment at 535–554 (FKMKMSVILGIIHMLFGVSL) threads the bilayer. The Cytoplasmic portion of the chain corresponds to 555-572 (SLFNHIYFKKPLNIYFGF). The helical transmembrane segment at 573–593 (IPEIIFMTSLFGYLVILIFYK) threads the bilayer. The Vacuolar segment spans residues 594–638 (WTAYDAHTSENAPSLLIHFINMFLFSYPESGYSMLYSGQKGIQCF). The helical transmembrane segment at 639–658 (LVVVALLCVPWMLLFKPLVL) threads the bilayer. Residues 659-724 (RRQYLRRKHL…ATMVHQAIHT (66 aa)) lie on the Cytoplasmic side of the membrane. Residues 725–749 (IEYCLGCISNTASYLRLWALSLAHA) form a helical membrane-spanning segment. Topologically, residues 750–770 (QLSEVLWTMVIHIGLSVKSLA) are vacuolar. The chain crosses the membrane as a helical span at residues 771 to 809 (GGLVLFFFFTAFATLTVAILLIMEGLSAFLHALRLHWVE). Topologically, residues 810-837 (FQNKFYSGTGFKFLPFSFEHIREGKFGE) are cytoplasmic.

It belongs to the V-ATPase 116 kDa subunit family. V-ATPase is a heteromultimeric enzyme made up of two complexes: the ATP-hydrolytic V1 complex and the proton translocation V0 complex. The V1 complex consists of three catalytic AB heterodimers that form a heterohexamer, three peripheral stalks each consisting of EG heterodimers, one central rotor including subunits D and F, and the regulatory subunits C and H. The proton translocation complex V0 consists of the proton transport subunit a, a ring of proteolipid subunits c9c'', rotary subunit d, subunits e and f, and the accessory subunits ATP6AP1/Ac45 and ATP6AP2/PRR. Interacts with SPAAR.

The protein resides in the cytoplasmic vesicle. The protein localises to the clathrin-coated vesicle membrane. Its subcellular location is the secretory vesicle. It localises to the synaptic vesicle membrane. It is found in the melanosome. Functionally, subunit of the V0 complex of vacuolar(H+)-ATPase (V-ATPase), a multisubunit enzyme composed of a peripheral complex (V1) that hydrolyzes ATP and a membrane integral complex (V0) that translocates protons. V-ATPase is responsible for the acidification of various organelles, such as lysosomes, endosomes, the trans-Golgi network, and secretory granules, including synaptic vesicles. In certain cell types, can be exported to the plasma membrane, where it is involved in the acidification of the extracellular environment. Required for assembly and activity of the vacuolar ATPase. Through its action on compartment acidification, plays an essential role in neuronal development in terms of integrity and connectivity of neurons. The protein is V-type proton ATPase 116 kDa subunit a 1 (ATP6V0A1) of Pongo abelii (Sumatran orangutan).